We begin with the raw amino-acid sequence, 112 residues long: UPF0212 protein Mhun_0078 (112 aa).

It belongs to the UPF0212 family.

The polypeptide is UPF0212 protein Mhun_0078 (Methanospirillum hungatei JF-1 (strain ATCC 27890 / DSM 864 / NBRC 100397 / JF-1)).